Reading from the N-terminus, the 368-residue chain is Cyclin-dependent kinase 2 (368 aa).

The region spanning 45–330 is the Protein kinase domain; that stretch reads FCSLRRIGEG…AKGALSHRYF (286 aa). Residues 51–59 and K74 each bind ATP; that span reads IGEGTYGVV. The active-site Proton acceptor is D170. Residues N175 and D188 each contribute to the Mg(2+) site.

It belongs to the protein kinase superfamily. CMGC Ser/Thr protein kinase family. CDC2/CDKX subfamily. Interacts with cye-1; the interaction likely regulates cdk-2 activity and is probably required for gld-1 phosphorylation. Mg(2+) is required as a cofactor.

The catalysed reaction is L-seryl-[protein] + ATP = O-phospho-L-seryl-[protein] + ADP + H(+). It catalyses the reaction L-threonyl-[protein] + ATP = O-phospho-L-threonyl-[protein] + ADP + H(+). Functionally, serine/threonine-protein kinase which, in association with cye-1, regulates proliferation, quiescent state and cell fate during the development of several cell lineages. In the embryo, initiates the establishment of cell polarity through the recruitment of the centrosomal proteins spd-2 and spd-5 during prophase. Phosphorylation and inhibition of the translational repressor gld-1 by the cdk-2/cye-1 complex regulates the pool of germline stem cells and the size of the mitotic zone in the gonads by preventing entry into meiosis. The sequence is that of Cyclin-dependent kinase 2 from Caenorhabditis elegans.